Consider the following 453-residue polypeptide: Exodeoxyribonuclease 7 large subunit (453 aa).

Belongs to the XseA family. Heterooligomer composed of large and small subunits.

The protein resides in the cytoplasm. It carries out the reaction Exonucleolytic cleavage in either 5'- to 3'- or 3'- to 5'-direction to yield nucleoside 5'-phosphates.. Functionally, bidirectionally degrades single-stranded DNA into large acid-insoluble oligonucleotides, which are then degraded further into small acid-soluble oligonucleotides. This chain is Exodeoxyribonuclease 7 large subunit, found in Geobacter metallireducens (strain ATCC 53774 / DSM 7210 / GS-15).